Reading from the N-terminus, the 243-residue chain is 3-deoxy-manno-octulosonate cytidylyltransferase (243 aa).

The protein belongs to the KdsB family.

It localises to the cytoplasm. The enzyme catalyses 3-deoxy-alpha-D-manno-oct-2-ulosonate + CTP = CMP-3-deoxy-beta-D-manno-octulosonate + diphosphate. It functions in the pathway nucleotide-sugar biosynthesis; CMP-3-deoxy-D-manno-octulosonate biosynthesis; CMP-3-deoxy-D-manno-octulosonate from 3-deoxy-D-manno-octulosonate and CTP: step 1/1. It participates in bacterial outer membrane biogenesis; lipopolysaccharide biosynthesis. Activates KDO (a required 8-carbon sugar) for incorporation into bacterial lipopolysaccharide in Gram-negative bacteria. In Bartonella bacilliformis (strain ATCC 35685 / KC583 / Herrer 020/F12,63), this protein is 3-deoxy-manno-octulosonate cytidylyltransferase.